Consider the following 229-residue polypeptide: Heptaprenylglyceryl phosphate synthase (229 aa).

The Mg(2+) site is built by Asp13 and Thr39.

This sequence belongs to the GGGP/HepGP synthase family. Homodimer. Mg(2+) serves as cofactor.

The catalysed reaction is sn-glycerol 1-phosphate + all-trans-heptaprenyl diphosphate = 3-heptaprenyl-sn-glycero-1-phosphate + diphosphate. Its pathway is membrane lipid metabolism; glycerophospholipid metabolism. Prenyltransferase that catalyzes in vivo the transfer of the heptaprenyl moiety of heptaprenyl pyrophosphate (HepPP; 35 carbon atoms) to the C3 hydroxyl of sn-glycerol-1-phosphate (G1P), producing heptaprenylglyceryl phosphate (HepGP). This reaction is an ether-bond-formation step in the biosynthesis of archaea-type G1P-based membrane lipids found in Bacillales. The polypeptide is Heptaprenylglyceryl phosphate synthase (Lysinibacillus sphaericus (strain C3-41)).